Reading from the N-terminus, the 942-residue chain is MPGNKYNCSSSHIPLSRTERLLRDRELREKRKSNRARNPNDVAGSSENSENDLRLEGDSSRQYVEQYLEGAAAAMAHDDACERQEVRPYNRQRLLVVANRLPVSAVRRGEDSWSLEISAGGLVSALLGVKEFEARWIGWAGVNVPDEVGQKALSKALAEKRCIPVFLDEEIVHQYYNGYCNNILWPLFHYLGLPQEDRLATTRSFQSQFAAYKKANQMFADVVNEHYEEGDVVWCHDYHLMFLPKCLKEYNSKMKVGWFLHTPFPSSEIHRTLPSRSELLRSVLAADLVGFHTYDYARHFVSACTRILGLEGTPEGVEDQGRLTRVAAFPIGIDSDRFIRALEVPEVIQHMKELKERFAGRKVMLGVDRLDMIKGIPQKILAFEKFLEENANWRDKVVLLQIAVPTRTDVPEYQKLTSQVHEIVGRINGRFGTLTAVPIHHLDRSLDFHALCALYAVTDVALVTSLRDGMNLVSYEFVACQEAKKGVLILSEFAGAAQSLGAGAILVNPWNITEVAASIGQALNMTAEEREKRHRHNFHHVKTHTAQEWAETFVSELNDTVIEAQLRISKVPPELPQHDAIQRYSKSNNRLLILGFNATLTEPVDNQGRRGDQIKEMDLNLHPELKGPLKALCSDPSTTIVVLSGSSRSVLDKNFGEYDMWLAAENGMFLRLTNGEWMTTMPEHLNMEWVDSVKHVFKYFTERTPRSHFETRDTSLIWNYKYADIEFGRLQARDLLQHLWTGPISNASVDVVQGSRSVEVRAVGVTKGAAIDRILGEIVHSKSMTTPIDYVLCIGHFLGKDEDVYTFFEPELPSDMPAIARSRPSSDSGAKSSSGDRRPPSKSTHNNNKSGSKSSSSSNSNNNNKSSQRSLQSERKSGSNHSLGNSRRPSPEKISWNVLDLKGENYFSCAVGRTRTNARYLLGSPDDVVCFLEKLADTTSSP.

The interval 28 to 57 (REKRKSNRARNPNDVAGSSENSENDLRLEG) is disordered. Residues 92 to 559 (QRLLVVANRL…AETFVSELND (468 aa)) form a glycosyltransferase region. A disordered region spans residues 815 to 892 (DMPAIARSRP…LGNSRRPSPE (78 aa)). Low complexity-rich tracts occupy residues 821 to 833 (RSRP…AKSS) and 841 to 867 (SKST…NKSS). Over residues 879–888 (SNHSLGNSRR) the composition is skewed to polar residues.

In the N-terminal section; belongs to the glycosyltransferase 20 family. It in the C-terminal section; belongs to the trehalose phosphatase family. Expressed in seedlings, leaves, roots, stems, flowers and siliques.

The protein resides in the vacuole. It is found in the secreted. Its subcellular location is the cell wall. It localises to the cytoplasm. The enzyme catalyses D-glucose 6-phosphate + UDP-alpha-D-glucose = alpha,alpha-trehalose 6-phosphate + UDP + H(+). Required for normal embryo development, vegetative growth and transition to flowering. Regulates embryo growth, cell wall deposition, starch and sucrose degradation, but not cell differentiation. Involved in the regulation of glucose sensing and signaling genes during plant development. The protein is Alpha,alpha-trehalose-phosphate synthase [UDP-forming] 1 of Arabidopsis thaliana (Mouse-ear cress).